Consider the following 182-residue polypeptide: Large ribosomal subunit protein uL5 (182 aa).

The protein belongs to the universal ribosomal protein uL5 family. In terms of assembly, part of the 50S ribosomal subunit; part of the 5S rRNA/L5/L18/L25 subcomplex. Contacts the 5S rRNA and the P site tRNA. Forms a bridge to the 30S subunit in the 70S ribosome.

In terms of biological role, this is one of the proteins that bind and probably mediate the attachment of the 5S RNA into the large ribosomal subunit, where it forms part of the central protuberance. In the 70S ribosome it contacts protein S13 of the 30S subunit (bridge B1b), connecting the 2 subunits; this bridge is implicated in subunit movement. Contacts the P site tRNA; the 5S rRNA and some of its associated proteins might help stabilize positioning of ribosome-bound tRNAs. The polypeptide is Large ribosomal subunit protein uL5 (Borrelia garinii subsp. bavariensis (strain ATCC BAA-2496 / DSM 23469 / PBi) (Borreliella bavariensis)).